The following is a 479-amino-acid chain: Serine palmitoyltransferase 1 (479 aa).

Residues 1–16 (MFLFDIYNNILYYTKE) lie on the Lumenal side of the membrane. The helical transmembrane segment at 17-37 (FIVTSTSPNLFIHGLMAVFII) threads the bilayer. The Cytoplasmic portion of the chain corresponds to 38–479 (YLLTKRPFKP…KCTSFVLESN (442 aa)).

Belongs to the class-II pyridoxal-phosphate-dependent aminotransferase family. As to quaternary structure, forms a heterodimer with sptB. Requires pyridoxal 5'-phosphate as cofactor.

It is found in the endoplasmic reticulum membrane. The catalysed reaction is L-serine + hexadecanoyl-CoA + H(+) = 3-oxosphinganine + CO2 + CoA. Its pathway is lipid metabolism; sphingolipid metabolism. In terms of biological role, component of serine palmitoyltransferase (SPT), which catalyzes the committed step in the synthesis of sphingolipids, the condensation of serine with palmitoyl CoA to form the long chain base 3-ketosphinganine. The chain is Serine palmitoyltransferase 1 (sptA) from Dictyostelium discoideum (Social amoeba).